The primary structure comprises 371 residues: Cytochrome b (371 aa).

4 helical membrane-spanning segments follow: residues 25 to 45 (FGSM…FLAV), 69 to 90 (WMMQ…YIHI), 105 to 125 (WMSG…GYVL), and 170 to 190 (FFAL…LHVI). Residues histidine 75 and histidine 89 each contribute to the heme b site. Heme b-binding residues include histidine 174 and histidine 188. Residue histidine 193 coordinates a ubiquinone. The next 4 helical transmembrane spans lie at 218–238 (HKDL…VSFF), 280–300 (LGGA…PFTH), 312–332 (LSQL…WAAT), and 339–358 (FITI…LSIP).

The protein belongs to the cytochrome b family. As to quaternary structure, the cytochrome bc1 complex contains 3 respiratory subunits (MT-CYB, CYC1 and UQCRFS1), 2 core proteins (UQCRC1 and UQCRC2) and probably 6 low-molecular weight proteins. It depends on heme b as a cofactor.

Its subcellular location is the mitochondrion inner membrane. In terms of biological role, component of the ubiquinol-cytochrome c reductase complex (complex III or cytochrome b-c1 complex) that is part of the mitochondrial respiratory chain. The b-c1 complex mediates electron transfer from ubiquinol to cytochrome c. Contributes to the generation of a proton gradient across the mitochondrial membrane that is then used for ATP synthesis. The sequence is that of Cytochrome b (MT-CYB) from Liasis mackloti savuensis (Savu python).